The chain runs to 170 residues: Myelin-associated oligodendrocyte basic protein (170 aa).

The interval Ser69–Trp170 is disordered. The segment covering Pro82–Pro92 has biased composition (low complexity). A phosphoserine mark is found at Ser85, Ser98, and Ser107. Repeat 1 spans residues Pro93 to Arg101. Residues Pro93 to Pro114 are compositionally biased toward pro residues. A 3 X 9 AA approximate tandem repeats region spans residues Pro93–Arg119. A 2; half-length repeat occupies Pro105–Ile110. Repeat unit 3 spans residues Pro111–Arg119. Over residues Ser118–Val130 the composition is skewed to basic and acidic residues. Residues Lys138–Pro151 are compositionally biased toward low complexity.

Expressed predominantly in oligodendrocytes, in CNS myelin of the cerebrum and spinal cord. No expression seen in sciatic nerve.

The protein resides in the cytoplasm. It is found in the perinuclear region. In terms of biological role, may play a role in compacting or stabilizing the myelin sheath, possibly by binding the negatively charged acidic phospholipids of the cytoplasmic membrane. In Rattus norvegicus (Rat), this protein is Myelin-associated oligodendrocyte basic protein (Mobp).